We begin with the raw amino-acid sequence, 346 residues long: Biotin synthase (346 aa).

A Radical SAM core domain is found at 41–265 (NEVQISTLLS…MMPHSYVRLS (225 aa)). The [4Fe-4S] cluster site is built by C56, C60, and C63. Positions 100, 131, 191, and 263 each coordinate [2Fe-2S] cluster.

The protein belongs to the radical SAM superfamily. Biotin synthase family. As to quaternary structure, homodimer. Requires [4Fe-4S] cluster as cofactor. [2Fe-2S] cluster is required as a cofactor.

It carries out the reaction (4R,5S)-dethiobiotin + (sulfur carrier)-SH + 2 reduced [2Fe-2S]-[ferredoxin] + 2 S-adenosyl-L-methionine = (sulfur carrier)-H + biotin + 2 5'-deoxyadenosine + 2 L-methionine + 2 oxidized [2Fe-2S]-[ferredoxin]. The protein operates within cofactor biosynthesis; biotin biosynthesis; biotin from 7,8-diaminononanoate: step 2/2. In terms of biological role, catalyzes the conversion of dethiobiotin (DTB) to biotin by the insertion of a sulfur atom into dethiobiotin via a radical-based mechanism. This is Biotin synthase from Pseudoalteromonas translucida (strain TAC 125).